We begin with the raw amino-acid sequence, 447 residues long: MPPSAAKQMGASTGVHAGVTDSSAFTRKDVADRPDLTIVGDSVYDAKAFRSEHPGGAHFVSLFGGRDATEAFMEYHRRAWPKSRMSRFHVGSLASTEEPVAADEGYLQLCARIAKMVPSVSSGFAPASYWVKAGLILGSAIALEAYMLYAGKRLLPSIVLGWLFALIGLNIQHDANHGALSKSASVNLALGLCQDWIGGSMILWLQEHVVMHHLHTNDVDKDPDQKAHGALRLKPTDAWSPMHWLQHLYLLPGETMYAFKLLFLDISELVMWRWEGEPISKLAGYLFMPSLLLKLTFWARFVALPLYLAPSVHTAVCIAATVMTGSFYLAFFFFISHNFEGVASVGPDGSITSMTRGASFLKRQAETSSNVGGPLLATLNGGLNYQIEHHLFPRVHHGFYPRLAPLVKAELEARGIEYKHYPTIWSNLASTLRHMYALGRRPRSKAE.

The Cytochrome b5 heme-binding domain occupies 36–94; the sequence is LTIVGDSVYDAKAFRSEHPGGAHFVSLFGGRDATEAFMEYHRRAWPKSRMSRFHVGSLA. Heme contacts are provided by H53 and H76. 3 consecutive transmembrane segments (helical) span residues 123–143, 154–174, and 185–205; these read GFAP…AIAL, LLPS…IQHD, and SVNL…ILWL. The short motif at 173–177 is the Histidine box-1 element; sequence HDANH. Residues 208 to 213 carry the Histidine box-2 motif; it reads HVVMHH. The next 3 helical transmembrane spans lie at 244-264, 286-306, and 315-335; these read WLQH…LLFL, LFMP…ALPL, and AVCI…FFFI. Residues 386-390 carry the Histidine box-3 motif; it reads QIEHH.

Belongs to the fatty acid desaturase type 1 family. Fe(2+) serves as cofactor.

Its subcellular location is the membrane. The catalysed reaction is a (7Z,10Z,13Z,16Z,19Z)-docosapentaenoyl-containing glycerolipid + 2 Fe(II)-[cytochrome b5] + O2 + 2 H(+) = a (4Z,7Z,10Z,13Z,16Z,19Z)-docosahexaenoyl-containing glycerolipid + 2 Fe(III)-[cytochrome b5] + 2 H2O. The enzyme catalyses a (7Z,10Z,13Z,16Z)-docosatetraenoyl-containing glycerolipid + 2 Fe(II)-[cytochrome b5] + O2 + 2 H(+) = a (4Z,7Z,10Z,13Z,16Z)-docosapentaenoyl-containing glycerolipid + 2 Fe(III)-[cytochrome b5] + 2 H2O. Functionally, fatty acid desaturase that introduces a cis double bond at the 4-position in 22-carbon polyunsaturated fatty acids that contain a Delta(7) double bond, resulting in the production of delta-4 desaturated fatty acid docosahexanoic acid (DHA). The sequence is that of Acyl-lipid (7-3)-desaturase from Rebecca salina (Marine microalga).